Reading from the N-terminus, the 428-residue chain is MLDIRLFRNEPDTVKSKIELRGDDPKVVDEILELDEQRRKLIIATEEMKARRNKVSEEIALKKRNKENDDDVIAEMRTLGDDIKEKDSQLNEIDNKMTGILCRIPNLISDDVPQGESDEDNVEVKKWGTPREFSFEPKAHWDIVEELKMADFDRAAKVSGARFVYLTNEGAQLERALMNYMITKHTTQHGYTEMMVPQLVNADTMYGTGQLPKFEEDLFKVEKEGLYTIPTAEVPLTNFYRNEIIQPGVLPEKFTGQSACFRSEAGSAGRDTRGLIRLHQFDKVEMVRFEQPEDSWNALEEMTTNAEAILEELGLPYRRVILCTGDIGFSASKTYDLEVWLPSYNDYKEISSCSNCMDFQARRANIRFKRDKAAKPELAHTLNGSGLAVGRTFAAIVENYQNEDGTVTIPEALVPFMGGKTQISKPVK.

An L-serine-binding site is contributed by 231–233; that stretch reads TAE. 262-264 provides a ligand contact to ATP; the sequence is RSE. Glu-285 contributes to the L-serine binding site. An ATP-binding site is contributed by 349–352; that stretch reads EISS. Ser-385 serves as a coordination point for L-serine.

Belongs to the class-II aminoacyl-tRNA synthetase family. Type-1 seryl-tRNA synthetase subfamily. In terms of assembly, homodimer. The tRNA molecule binds across the dimer.

Its subcellular location is the cytoplasm. The catalysed reaction is tRNA(Ser) + L-serine + ATP = L-seryl-tRNA(Ser) + AMP + diphosphate + H(+). It carries out the reaction tRNA(Sec) + L-serine + ATP = L-seryl-tRNA(Sec) + AMP + diphosphate + H(+). The protein operates within aminoacyl-tRNA biosynthesis; selenocysteinyl-tRNA(Sec) biosynthesis; L-seryl-tRNA(Sec) from L-serine and tRNA(Sec): step 1/1. In terms of biological role, catalyzes the attachment of serine to tRNA(Ser). Is also able to aminoacylate tRNA(Sec) with serine, to form the misacylated tRNA L-seryl-tRNA(Sec), which will be further converted into selenocysteinyl-tRNA(Sec). This chain is Serine--tRNA ligase, found in Staphylococcus aureus (strain bovine RF122 / ET3-1).